The chain runs to 347 residues: Holliday junction branch migration complex subunit RuvB (347 aa).

A large ATPase domain (RuvB-L) region spans residues 4–185 (TDRLITPAPL…FGIISRLEFY (182 aa)). Residues leucine 24, arginine 25, glycine 66, lysine 69, threonine 70, threonine 71, 132-134 (EDY), arginine 175, tyrosine 185, and arginine 222 each bind ATP. Mg(2+) is bound at residue threonine 70. The interval 186–256 (SVEELTQIVM…VADAALLMLD (71 aa)) is small ATPAse domain (RuvB-S). The interval 259 to 347 (AIGLDVMDRK…LSADLWDEKQ (89 aa)) is head domain (RuvB-H). Residues arginine 295, arginine 314, and arginine 319 each contribute to the DNA site.

It belongs to the RuvB family. Homohexamer. Forms an RuvA(8)-RuvB(12)-Holliday junction (HJ) complex. HJ DNA is sandwiched between 2 RuvA tetramers; dsDNA enters through RuvA and exits via RuvB. An RuvB hexamer assembles on each DNA strand where it exits the tetramer. Each RuvB hexamer is contacted by two RuvA subunits (via domain III) on 2 adjacent RuvB subunits; this complex drives branch migration. In the full resolvosome a probable DNA-RuvA(4)-RuvB(12)-RuvC(2) complex forms which resolves the HJ.

It localises to the cytoplasm. The enzyme catalyses ATP + H2O = ADP + phosphate + H(+). Functionally, the RuvA-RuvB-RuvC complex processes Holliday junction (HJ) DNA during genetic recombination and DNA repair, while the RuvA-RuvB complex plays an important role in the rescue of blocked DNA replication forks via replication fork reversal (RFR). RuvA specifically binds to HJ cruciform DNA, conferring on it an open structure. The RuvB hexamer acts as an ATP-dependent pump, pulling dsDNA into and through the RuvAB complex. RuvB forms 2 homohexamers on either side of HJ DNA bound by 1 or 2 RuvA tetramers; 4 subunits per hexamer contact DNA at a time. Coordinated motions by a converter formed by DNA-disengaged RuvB subunits stimulates ATP hydrolysis and nucleotide exchange. Immobilization of the converter enables RuvB to convert the ATP-contained energy into a lever motion, pulling 2 nucleotides of DNA out of the RuvA tetramer per ATP hydrolyzed, thus driving DNA branch migration. The RuvB motors rotate together with the DNA substrate, which together with the progressing nucleotide cycle form the mechanistic basis for DNA recombination by continuous HJ branch migration. Branch migration allows RuvC to scan DNA until it finds its consensus sequence, where it cleaves and resolves cruciform DNA. The chain is Holliday junction branch migration complex subunit RuvB from Nitrosospira multiformis (strain ATCC 25196 / NCIMB 11849 / C 71).